The sequence spans 295 residues: Putative enoyl reductase C646.07c (295 aa).

The Cytoplasmic segment spans residues 1–84; the sequence is MSITLSSRGR…KDLGPQIGWR (84 aa). Residues 85–105 traverse the membrane as a helical segment; sequence TVFMIEYLGPLVIHLFFILNY. The Lumenal portion of the chain corresponds to 106-157; it reads KWIYRKDYNLCLNQKIAFVLVMLHFMKREYESIFVHRFSLATMPLRNIFKNC. The helical transmembrane segment at 158-178 threads the bilayer; it reads AHYHLLSGLFLAYFIYGPWHA. Over 179–186 the chain is Cytoplasmic; the sequence is NDYIKPNH. The helical transmembrane segment at 187-207 threads the bilayer; the sequence is LLFLIVGWAFAVLSNFRTHII. At 208-223 the chain is on the lumenal side; the sequence is LRDLRPAGSKKRVIPT. A helical transmembrane segment spans residues 224–246; sequence GYGFNLVSFPNYFFESLGWLFFA. Over 247-250 the chain is Cytoplasmic; that stretch reads LLTK. The helical transmembrane segment at 251–268 threads the bilayer; sequence SWASWIFLFVGSAQMFVW. Residues 269–295 are Lumenal-facing; sequence AKKKHARYLKEFPNYPRSRKIMIPFFL.

This sequence belongs to the steroid 5-alpha reductase family.

The protein resides in the endoplasmic reticulum membrane. It catalyses the reaction a (2E)-enoyl-CoA + NADPH + H(+) = a 2,3-saturated acyl-CoA + NADP(+). In Schizosaccharomyces pombe (strain 972 / ATCC 24843) (Fission yeast), this protein is Putative enoyl reductase C646.07c.